A 121-amino-acid chain; its full sequence is Acidic phospholipase A2 SpII RP4 (121 aa).

Intrachain disulfides connect cysteine 25–cysteine 114, cysteine 27–cysteine 43, cysteine 42–cysteine 94, cysteine 48–cysteine 121, cysteine 49–cysteine 87, cysteine 56–cysteine 80, and cysteine 74–cysteine 85. 3 residues coordinate Ca(2+): tyrosine 26, glycine 28, and glycine 30. The active site involves histidine 46. Aspartate 47 contributes to the Ca(2+) binding site. Residue aspartate 88 is part of the active site.

Ca(2+) is required as a cofactor. In terms of tissue distribution, expressed by the venom gland.

The protein localises to the secreted. It carries out the reaction a 1,2-diacyl-sn-glycero-3-phosphocholine + H2O = a 1-acyl-sn-glycero-3-phosphocholine + a fatty acid + H(+). Snake venom phospholipase A2 (PLA2) which exhibits indirect hemolysis, induces mild edema inflammation in the foot pads of mice and slightly delays anticoagulant activities. In mice, not lethal, even at the highest dose, and exhibits low to moderate myotoxicity on muscular fibers. PLA2 catalyzes the calcium-dependent hydrolysis of the 2-acyl groups in 3-sn-phosphoglycerides. The protein is Acidic phospholipase A2 SpII RP4 of Bothrops alternatus (Urutu).